A 322-amino-acid chain; its full sequence is Cytochrome c biogenesis protein CcsA (322 aa).

A run of 7 helical transmembrane segments spans residues 9-29 (IFTH…LITL), 44-64 (GMIV…IYSG), 71-91 (LYES…VPYF), 143-163 (MILS…LLVI), 226-246 (VISL…VWAN), 255-275 (WDPK…YLHI), and 287-307 (AIVA…VNLL).

This sequence belongs to the CcmF/CycK/Ccl1/NrfE/CcsA family. In terms of assembly, may interact with Ccs1.

The protein localises to the plastid. Its subcellular location is the chloroplast thylakoid membrane. Functionally, required during biogenesis of c-type cytochromes (cytochrome c6 and cytochrome f) at the step of heme attachment. This is Cytochrome c biogenesis protein CcsA from Lactuca sativa (Garden lettuce).